A 238-amino-acid polypeptide reads, in one-letter code: Tetrahydromethanopterin S-methyltransferase subunit A 1 (238 aa).

The Cytoplasmic portion of the chain corresponds to Val-2 to Lys-218. His-84 provides a ligand contact to 5-hydroxybenzimidazolylcob(I)amide. A helical membrane pass occupies residues Val-219–Leu-237. Val-238 is a topological domain (extracellular).

This sequence belongs to the MtrA family. The complex is composed of 8 subunits; MtrA, MtrB, MtrC, MtrD, MtrE, MtrF, MtrG and MtrH. It depends on 5-hydroxybenzimidazolylcob(I)amide as a cofactor.

The protein localises to the cell membrane. It carries out the reaction 5-methyl-5,6,7,8-tetrahydromethanopterin + coenzyme M + 2 Na(+)(in) = 5,6,7,8-tetrahydromethanopterin + methyl-coenzyme M + 2 Na(+)(out). It functions in the pathway one-carbon metabolism; methanogenesis from CO(2); methyl-coenzyme M from 5,10-methylene-5,6,7,8-tetrahydromethanopterin: step 2/2. Its function is as follows. Part of a complex that catalyzes the formation of methyl-coenzyme M and tetrahydromethanopterin from coenzyme M and methyl-tetrahydromethanopterin. This is an energy-conserving, sodium-ion translocating step. This Methanothermobacter marburgensis (strain ATCC BAA-927 / DSM 2133 / JCM 14651 / NBRC 100331 / OCM 82 / Marburg) (Methanobacterium thermoautotrophicum) protein is Tetrahydromethanopterin S-methyltransferase subunit A 1.